The following is a 245-amino-acid chain: Phosducin (245 aa).

The interval M1 to R70 is disordered. A Phosducin domain is found at M1–M244. Composition is skewed to basic and acidic residues over residues D28–L50 and S58–S69. S73 is subject to Phosphoserine; by PKA. A thioredoxin fold region spans residues Y111–E245.

The protein belongs to the phosducin family. As to quaternary structure, interacts with CRX. Forms a complex with the beta and gamma subunits of the GTP-binding protein, transducin. Post-translationally, light-induced changes in cyclic nucleotide levels modulate the phosphorylation of this protein by cAMP kinase.

The protein resides in the cytoplasm. Its subcellular location is the cytosol. The protein localises to the nucleus. It is found in the cell projection. It localises to the cilium. The protein resides in the photoreceptor outer segment. Its subcellular location is the photoreceptor inner segment. Its function is as follows. Inhibits the transcriptional activation activity of the cone-rod homeobox CRX. May participate in the regulation of visual phototransduction or in the integration of photoreceptor metabolism. This Bos taurus (Bovine) protein is Phosducin (PDC).